The chain runs to 94 residues: uncharacterized protein (94 aa).

This is an uncharacterized protein from Bacillus subtilis (strain 168).